A 180-amino-acid polypeptide reads, in one-letter code: Large ribosomal subunit protein uL6 (180 aa).

It belongs to the universal ribosomal protein uL6 family. As to quaternary structure, part of the 50S ribosomal subunit.

Functionally, this protein binds to the 23S rRNA, and is important in its secondary structure. It is located near the subunit interface in the base of the L7/L12 stalk, and near the tRNA binding site of the peptidyltransferase center. This Caldanaerobacter subterraneus subsp. tengcongensis (strain DSM 15242 / JCM 11007 / NBRC 100824 / MB4) (Thermoanaerobacter tengcongensis) protein is Large ribosomal subunit protein uL6.